The chain runs to 276 residues: Undecaprenyl-diphosphatase (276 aa).

Transmembrane regions (helical) follow at residues 40-60, 98-118, 121-141, 155-175, 200-220, 227-247, and 255-275; these read GLAF…TFFW, WLII…KDAI, IFRG…VLYY, MSFK…FPGI, FLLS…DIAT, VLLA…KLLM, and LDIF…LSVV.

It belongs to the UppP family.

The protein localises to the cell membrane. It carries out the reaction di-trans,octa-cis-undecaprenyl diphosphate + H2O = di-trans,octa-cis-undecaprenyl phosphate + phosphate + H(+). Catalyzes the dephosphorylation of undecaprenyl diphosphate (UPP). The sequence is that of Undecaprenyl-diphosphatase from Methanosphaera stadtmanae (strain ATCC 43021 / DSM 3091 / JCM 11832 / MCB-3).